A 192-amino-acid polypeptide reads, in one-letter code: Putative BTB/POZ domain-containing protein At4g04090 (192 aa).

The region spanning 23 to 96 (VDVRLMARDS…TYSDGSMLSE (74 aa)) is the BTB domain.

It functions in the pathway protein modification; protein ubiquitination. May act as a substrate-specific adapter of an E3 ubiquitin-protein ligase complex (CUL3-RBX1-BTB) which mediates the ubiquitination and subsequent proteasomal degradation of target proteins. This is Putative BTB/POZ domain-containing protein At4g04090 from Arabidopsis thaliana (Mouse-ear cress).